Reading from the N-terminus, the 274-residue chain is Large ribosomal subunit protein uL2cz/uL2cy (274 aa).

Disordered regions lie at residues 1-25 (MAIHLYKTSTPSTRNGAVDSQVKSN) and 224-274 (NPVD…RRSK).

It belongs to the universal ribosomal protein uL2 family. Part of the 50S ribosomal subunit.

The protein resides in the plastid. It is found in the chloroplast. This Aethionema cordifolium (Lebanon stonecress) protein is Large ribosomal subunit protein uL2cz/uL2cy (rpl2-A).